Consider the following 273-residue polypeptide: Kit ligand (273 aa).

The N-terminal stretch at 1–25 (MKKTQTWIITCIYLQLLLFNPLVKT) is a signal peptide. At Gln-26 the chain carries Pyrrolidone carboxylic acid. Topologically, residues 26 to 214 (QEICRNPVTD…AKSPEDPGLQ (189 aa)) are extracellular. Intrachain disulfides connect Cys-29-Cys-114 and Cys-68-Cys-163. Asn-90 carries N-linked (GlcNAc...) asparagine; partial glycosylation. Asn-145 carries an N-linked (GlcNAc...) asparagine glycan. O-linked (GalNAc...) serine glycosylation occurs at Ser-167. O-linked (GalNAc...) threonine glycosylation is found at Thr-168 and Thr-180. A disordered region spans residues 190 to 211 (ASSLRNDSSSSNRKAAKSPEDP). The span at 191–202 (SSLRNDSSSSNR) shows a compositional bias: low complexity. Asn-195 carries an N-linked (GlcNAc...) asparagine glycan. A helical transmembrane segment spans residues 215-237 (WTAMALPALISLVIGFAFGALYW). Over 238 to 273 (KKKQSSLTRAVENIQINEEDNEISMLQQKEREFQEV) the chain is Cytoplasmic.

The protein belongs to the SCF family. As to quaternary structure, homodimer, non-covalently linked. Heterotetramer with KIT, binding two KIT molecules; thereby mediates KIT dimerization and subsequent activation by autophosphorylation. A soluble form is produced by proteolytic processing of isoform 1 in the extracellular domain. Post-translationally, the identity of N- and O-linked saccharides is not reported in PubMed:1708771. The O-linked polysaccharides are probably the mucin type linked to GalNAc.

It is found in the cell membrane. It localises to the cytoplasm. Its subcellular location is the cytoskeleton. The protein localises to the cell projection. The protein resides in the lamellipodium. It is found in the filopodium. It localises to the secreted. In terms of biological role, ligand for the receptor-type protein-tyrosine kinase KIT. Plays an essential role in the regulation of cell survival and proliferation, hematopoiesis, stem cell maintenance, gametogenesis, mast cell development, migration and function, and in melanogenesis. KITLG/SCF binding can activate several signaling pathways. Promotes phosphorylation of PIK3R1, the regulatory subunit of phosphatidylinositol 3-kinase, and subsequent activation of the kinase AKT1. KITLG/SCF and KIT also transmit signals via GRB2 and activation of RAS, RAF1 and the MAP kinases MAPK1/ERK2 and/or MAPK3/ERK1. KITLG/SCF and KIT promote activation of STAT family members STAT1, STAT3 and STAT5. KITLG/SCF and KIT promote activation of PLCG1, leading to the production of the cellular signaling molecules diacylglycerol and inositol 1,4,5-trisphosphate. KITLG/SCF acts synergistically with other cytokines, probably interleukins. The chain is Kit ligand (Kitlg) from Rattus norvegicus (Rat).